The following is a 1174-amino-acid chain: Tyrosine-protein phosphatase non-receptor type 21 (1174 aa).

Positions leucine 23 to glutamine 308 constitute an FERM domain. The span at serine 396 to glycine 423 shows a compositional bias: polar residues. The interval serine 396–tyrosine 445 is disordered. Serine 577, serine 589, serine 590, serine 637, and serine 673 each carry phosphoserine. The segment at serine 673–glycine 692 is disordered. Positions arginine 681 to glycine 692 are enriched in basic and acidic residues. Phosphoserine occurs at positions 710 and 711. Disordered regions lie at residues serine 711 to glycine 745 and lysine 769 to arginine 806. The span at glutamate 712 to glutamate 722 shows a compositional bias: acidic residues. Residues methionine 796 to glycine 805 show a composition bias toward polar residues. 3 positions are modified to phosphoserine: serine 797, serine 799, and serine 804. In terms of domain architecture, Tyrosine-protein phosphatase spans valine 896 to phenylalanine 1167. Residues glutamate 1067, cysteine 1108–arginine 1114, and glutamine 1152 each bind substrate. The active-site Phosphocysteine intermediate is the cysteine 1108.

The protein belongs to the protein-tyrosine phosphatase family. Non-receptor class subfamily.

It is found in the cytoplasm. Its subcellular location is the cytoskeleton. The enzyme catalyses O-phospho-L-tyrosyl-[protein] + H2O = L-tyrosyl-[protein] + phosphate. This is Tyrosine-protein phosphatase non-receptor type 21 (PTPN21) from Homo sapiens (Human).